Consider the following 748-residue polypeptide: Signal transducer and activator of transcription 4 (748 aa).

In terms of domain architecture, SH2 spans 569–664 (WIDGYVMGFV…ENPLKYLYPD (96 aa)). An N6-acetyllysine modification is found at Lys-667. At Tyr-693 the chain carries Phosphotyrosine; by JAK. A Phosphoserine; by MAP2K6 modification is found at Ser-721.

Belongs to the transcription factor STAT family. Forms a homodimer or a heterodimer with a related family member. Interacts with ARL2BP. The SH2 domain interacts, in vitro, with IL12RB2 via a short cytoplasmic domain. Interacts with STAT1. Interacts with JUN; this complex efficiently interacts with the AP-1-related sequence of the IFN-gamma. In terms of processing, acetylation at Lys-667 is required for JAK2-mediated phosphorylation and activation of STAT4. Tyrosine phosphorylated upon IL12 and IFN-alpha activation, but not by IFN-gamma in T-lymphocytes and NK cells. Serine phosphorylation is required for maximal transcriptional activity but not for DNA binding. Phosphorylation by MAP2K6 at Ser-721 is required for full transcriptional activity induced by IL12. However this serine phosphorylation is not required for cell proliferation although critical for IFN-gamma production.

It localises to the cytoplasm. It is found in the nucleus. Transcriptional regulator mainly expressed in hematopoietic cells that plays a critical role in cellular growth, differentiation and immune response. Plays a key role in the differentiation of T-helper 1 cells and the production of interferon-gamma. Also participates in multiple neutrophil functions including chemotaxis and production of the neutrophil extracellular traps. After IL12 binding to its receptor IL12RB2, STAT4 interacts with the intracellular domain of IL12RB2 and becomes tyrosine phosphorylated. Phosphorylated STAT4 then homodimerizes and migrates to the nucleus where it can recognize STAT target sequences present in IL12 responsive genes. Although IL12 appears to be the predominant activating signal, STAT4 can also be phosphorylated and activated in response to IFN-gamma stimulation via JAK1 and TYK2 and in response to different interleukins including IL23, IL2 and IL35. Transcription activation of IFN-gamma gene is mediated by interaction with JUN that forms a complex that efficiently interacts with the AP-1-related sequence of the IFN-gamma promoter. In response to IFN-alpha/beta signaling, acts as a transcriptional repressor and suppresses IL5 and IL13 mRNA expression during response to T-cell receptor (TCR) activation. This Homo sapiens (Human) protein is Signal transducer and activator of transcription 4 (STAT4).